The primary structure comprises 474 residues: tRNA-2-methylthio-N(6)-dimethylallyladenosine synthase (474 aa).

The region spanning 3–120 (KKLLIKTWGC…LPEMIKQSQS (118 aa)) is the MTTase N-terminal domain. The [4Fe-4S] cluster site is built by Cys12, Cys49, Cys83, Cys157, Cys161, and Cys164. A Radical SAM core domain is found at 143–375 (RAEGATAFVS…QQQINAQAMR (233 aa)). Positions 378 to 441 (RLMLGTEQRV…ANSLRGEIVR (64 aa)) constitute a TRAM domain.

Belongs to the methylthiotransferase family. MiaB subfamily. Monomer. [4Fe-4S] cluster serves as cofactor.

The protein resides in the cytoplasm. The enzyme catalyses N(6)-dimethylallyladenosine(37) in tRNA + (sulfur carrier)-SH + AH2 + 2 S-adenosyl-L-methionine = 2-methylsulfanyl-N(6)-dimethylallyladenosine(37) in tRNA + (sulfur carrier)-H + 5'-deoxyadenosine + L-methionine + A + S-adenosyl-L-homocysteine + 2 H(+). Its function is as follows. Catalyzes the methylthiolation of N6-(dimethylallyl)adenosine (i(6)A), leading to the formation of 2-methylthio-N6-(dimethylallyl)adenosine (ms(2)i(6)A) at position 37 in tRNAs that read codons beginning with uridine. The chain is tRNA-2-methylthio-N(6)-dimethylallyladenosine synthase from Vibrio vulnificus (strain YJ016).